Reading from the N-terminus, the 160-residue chain is Troponin C, skeletal muscle (160 aa).

Thr-2 carries the post-translational modification N-acetylthreonine. 4 EF-hand domains span residues 15–50 (EMIAEFKAAFDMFDADGGGDISVKELGTVMRMLGQT), 51–86 (PTKEELDAIIEEVDEDGSGTIDFEEFLVMMVRQMKE), 91–126 (KSEEELAECFRIFDRNADGYIDAEELAEIFRASGEH), and 127–160 (VTDEEIESLMKDGDKNNDGRIDFDEFLKMMEGVQ). 19 residues coordinate Ca(2+): Asp-28, Asp-30, Asp-34, Glu-39, Asp-64, Asp-66, Ser-68, Thr-70, Glu-75, Asp-104, Asn-106, Asp-108, Tyr-110, Glu-115, Asp-140, Asn-142, Asp-144, Arg-146, and Glu-151.

Belongs to the troponin C family.

In terms of biological role, troponin is the central regulatory protein of striated muscle contraction. Tn consists of three components: Tn-I which is the inhibitor of actomyosin ATPase, Tn-T which contains the binding site for tropomyosin and Tn-C. The binding of calcium to Tn-C abolishes the inhibitory action of Tn on actin filaments. In Oryctolagus cuniculus (Rabbit), this protein is Troponin C, skeletal muscle (TNNC2).